Consider the following 483-residue polypeptide: MORN repeat-containing protein 1 (483 aa).

A Phosphoserine modification is found at Ser-18. 7 MORN repeats span residues 39 to 61, 62 to 84, 86 to 108, 109 to 131, 132 to 154, 155 to 177, and 178 to 200; these read YEGEWKGGKKHGHGKLLFKDGSY, YEGEFVNGEITGEGYQHWAWSGN, YSGQFVLGEPQGHGIMKYKAGGH, YEGELSQGLREGQGFLEDQDGQV, YQGSFHDNKRHGRGQMVFKNGDK, YEGDWVRDQRQGHGVLFCADGST, and YKGQWHNDVFSGLGSLVHCSGVT. A disordered region spans residues 392–427; it reads EKAGNRPKGDRSPPEVLSTAQEPLRGTNRSDGTTAE. Residues 394–404 are compositionally biased toward basic and acidic residues; sequence AGNRPKGDRSP. The residue at position 403 (Ser-403) is a Phosphoserine. The span at 418 to 427 shows a compositional bias: polar residues; that stretch reads TNRSDGTTAE.

The polypeptide is MORN repeat-containing protein 1 (Morn1) (Rattus norvegicus (Rat)).